Reading from the N-terminus, the 292-residue chain is NAD-dependent protein deacetylase sir-2.4 (292 aa).

One can recognise a Deacetylase sirtuin-type domain in the interval 31–292 (IEKLRTLYNH…DEVPIPLKIS (262 aa)). NAD(+) contacts are provided by residues 56–75 (GAGVSTGSKLPDFRGKQGVW) and 116–119 (QNVD). Residue H136 is the Proton acceptor of the active site. C144, C147, C163, and C169 together coordinate Zn(2+). NAD(+)-binding positions include 216 to 218 (GTS), 242 to 244 (NYQ), and V260.

The protein belongs to the sirtuin family. Class IV subfamily. Zn(2+) serves as cofactor.

It carries out the reaction N(6)-acetyl-L-lysyl-[protein] + NAD(+) + H2O = 2''-O-acetyl-ADP-D-ribose + nicotinamide + L-lysyl-[protein]. Functionally, NAD-dependent protein deacetylase. This is NAD-dependent protein deacetylase sir-2.4 (sir-2.4) from Caenorhabditis elegans.